Reading from the N-terminus, the 873-residue chain is Nonsense-mediated mRNA decay factor SMG8 (873 aa).

Positions 531 to 604 (AKKMAQREDE…ESMASKTERE (74 aa)) are disordered. Over residues 540 to 550 (ELAEEDTDLDI) the composition is skewed to acidic residues. Composition is skewed to low complexity over residues 551-562 (PESLLDPDSTSP) and 574-583 (SSSESSSQES). A compositionally biased stretch (basic and acidic residues) spans 591 to 604 (SRRDESMASKTERE).

The protein belongs to the SMG8 family.

In terms of biological role, involved in nonsense-mediated decay (NMD) of mRNAs containing premature stop codons. Probable component of kinase complex containing smg-1 and recruited to stalled ribosomes. The protein is Nonsense-mediated mRNA decay factor SMG8 (smg-8) of Caenorhabditis elegans.